A 222-amino-acid chain; its full sequence is 7-carboxy-7-deazaguanine synthase (222 aa).

Substrate is bound by residues 16–18 (LQG) and arginine 31. Residues 22 to 222 (NLGRPAVFVR…IMAWGNARGK (201 aa)) form the Radical SAM core domain. Positions 35, 39, and 42 each coordinate [4Fe-4S] cluster. Threonine 44 contributes to the Mg(2+) binding site. Residue threonine 77 participates in substrate binding. S-adenosyl-L-methionine is bound by residues glycine 79 and 126-128 (SPK).

The protein belongs to the radical SAM superfamily. 7-carboxy-7-deazaguanine synthase family. Homodimer. The cofactor is [4Fe-4S] cluster. S-adenosyl-L-methionine is required as a cofactor. Mg(2+) serves as cofactor.

It carries out the reaction 6-carboxy-5,6,7,8-tetrahydropterin + H(+) = 7-carboxy-7-deazaguanine + NH4(+). Its pathway is purine metabolism; 7-cyano-7-deazaguanine biosynthesis. Catalyzes the complex heterocyclic radical-mediated conversion of 6-carboxy-5,6,7,8-tetrahydropterin (CPH4) to 7-carboxy-7-deazaguanine (CDG), a step common to the biosynthetic pathways of all 7-deazapurine-containing compounds. The sequence is that of 7-carboxy-7-deazaguanine synthase from Pyrobaculum aerophilum (strain ATCC 51768 / DSM 7523 / JCM 9630 / CIP 104966 / NBRC 100827 / IM2).